An 88-amino-acid chain; its full sequence is UPF0250 protein Sama_2593 (88 aa).

It belongs to the UPF0250 family.

This Shewanella amazonensis (strain ATCC BAA-1098 / SB2B) protein is UPF0250 protein Sama_2593.